The chain runs to 241 residues: PHD finger protein ALFIN-LIKE 1 (241 aa).

Ala-2 is modified (N-acetylalanine). Positions Asp-142 to Glu-182 are disordered. The PHD-type zinc-finger motif lies at Asp-185 to Lys-237.

This sequence belongs to the Alfin family. As to quaternary structure, interacts with H3K4me3 and to a lesser extent with H3K4me2. Ubiquitously expressed.

It localises to the nucleus. Histone-binding component that specifically recognizes H3 tails trimethylated on 'Lys-4' (H3K4me3), which mark transcription start sites of virtually all active genes. This Arabidopsis thaliana (Mouse-ear cress) protein is PHD finger protein ALFIN-LIKE 1 (AL1).